Reading from the N-terminus, the 383-residue chain is Probable arabinan endo-1,5-alpha-L-arabinosidase D (383 aa).

The N-terminal stretch at methionine 1–alanine 22 is a signal peptide. Aspartate 49 functions as the Proton acceptor in the catalytic mechanism. 3 N-linked (GlcNAc...) asparagine glycosylation sites follow: asparagine 75, asparagine 163, and asparagine 206. The active-site Proton donor is glutamate 227. Residue asparagine 325 is glycosylated (N-linked (GlcNAc...) asparagine). A lipid anchor (GPI-anchor amidated asparagine) is attached at asparagine 356. Residues proline 357–leucine 383 constitute a propeptide, removed in mature form.

Belongs to the glycosyl hydrolase 43 family.

It is found in the cell membrane. It carries out the reaction Endohydrolysis of (1-&gt;5)-alpha-arabinofuranosidic linkages in (1-&gt;5)-arabinans.. It functions in the pathway glycan metabolism; L-arabinan degradation. In terms of biological role, endo-1,5-alpha-L-arabinanase involved in degradation of pectin. Its preferred substrate is linear 1,5-alpha-L-arabinan. The protein is Probable arabinan endo-1,5-alpha-L-arabinosidase D (abnD) of Emericella nidulans (strain FGSC A4 / ATCC 38163 / CBS 112.46 / NRRL 194 / M139) (Aspergillus nidulans).